We begin with the raw amino-acid sequence, 364 residues long: RNA polymerase sigma factor SigA (364 aa).

Residues 132 to 202 (LAEANLRLVV…TRAIADQART (71 aa)) form a sigma-70 factor domain-2 region. An Interaction with polymerase core subunit RpoC motif is present at residues 156-159 (DLIQ). The tract at residues 211–287 (ETINKLIRVQ…DDVIESPVDY (77 aa)) is sigma-70 factor domain-3. The segment at 300 to 353 (VMDTLTDREENVLRMRFGLDDGRMHTLEDVGKQFKVTRERIRQIEAKAIKKLRH) is sigma-70 factor domain-4. Positions 326–345 (LEDVGKQFKVTRERIRQIEA) form a DNA-binding region, H-T-H motif.

The protein belongs to the sigma-70 factor family. RpoD/SigA subfamily. In terms of assembly, interacts transiently with the RNA polymerase catalytic core.

It is found in the cytoplasm. Functionally, sigma factors are initiation factors that promote the attachment of RNA polymerase to specific initiation sites and are then released. This sigma factor is the primary sigma factor during exponential growth. The polypeptide is RNA polymerase sigma factor SigA (Lactococcus lactis subsp. cremoris (Streptococcus cremoris)).